A 486-amino-acid polypeptide reads, in one-letter code: Heme A synthase COX15 (486 aa).

The transit peptide at 1 to 33 directs the protein to the mitochondrion; sequence MLFRNIEVGRQAAKLLTRTSSRLAWQSIGASRN. At 34–85 the chain is on the mitochondrial matrix side; that stretch reads ISTIRQQIRKTQLYNFKKTVSIRPFSLSSPVFKPHVASESNPIESRLKTSKN. Residues 86-106 traverse the membrane as a helical segment; the sequence is VAYWLIGTSGLVFGIVVLGGL. Residues 107-170 are Mitochondrial intermembrane-facing; that stretch reads TRLTESGLSI…FIFFMEWIHR (64 aa). H169 is a binding site for heme o. A helical membrane pass occupies residues 171-191; it reads LWGRAIGAVFILPAVYFAVSK. Topologically, residues 192-200 are mitochondrial matrix; sequence KTSGHVNKR. Residues 201-221 traverse the membrane as a helical segment; it reads LFGLAGLLGLQGFVGWWMVKS. At 222 to 243 the chain is on the mitochondrial intermembrane side; the sequence is GLDQEQLDARKSKPTVSQYRLT. The chain crosses the membrane as a helical span at residues 244 to 264; it reads THLGTAFFLYMGMLWTGLEIL. H245 contributes to the heme o binding site. The Mitochondrial matrix portion of the chain corresponds to 265-293; it reads RECKWIKNPVQAISLFKKLDNPAIGPMRK. A helical transmembrane segment spans residues 294–314; it reads ISLALLAVSFLTAMSGGMVAG. The Mitochondrial intermembrane segment spans residues 315–364; it reads LDAGWVYNTWPKMGERWFPSSRELMDENFCRREDKKDLWWRNLLENPVTV. The helical transmembrane segment at 365–387 threads the bilayer; the sequence is QLVHRTCAYVAFTSVLAAHMYAI. H368 is a heme b binding site. Topologically, residues 388 to 402 are mitochondrial matrix; sequence KKKAVIPRNAMTSLH. Residues 403 to 423 form a helical membrane-spanning segment; that stretch reads VMMGVVTLQATLGILTILYLV. A topological domain (mitochondrial intermembrane) is located at residue P424. Residues 425 to 445 traverse the membrane as a helical segment; the sequence is ISLASIHQAGALALLTSSLVF. H431 contributes to the heme b binding site. The Mitochondrial matrix portion of the chain corresponds to 446 to 486; the sequence is ASQLRKPRAPMRNVIITLPHSSKVTSGKILSEASKLASKPL.

Belongs to the COX15/CtaA family. Type 2 subfamily. In terms of assembly, forms 200-350 kDa oligomeric complexes independent on heme binding. In addition to form homooligomeric complexes, a portion also associates with the mitochondrial respiratory supercomplexes. Interacts with CcO assembly factors PET117, SHY1, COA3 and COA1, CcO subunit COX13 and cytochrome b-c1 subunit COR1. Heme b serves as cofactor.

The protein localises to the mitochondrion inner membrane. The catalysed reaction is Fe(II)-heme o + 2 A + H2O = Fe(II)-heme a + 2 AH2. The protein operates within porphyrin-containing compound metabolism; heme A biosynthesis; heme A from heme O: step 1/1. In terms of biological role, catalyzes the second reaction in the biosynthesis of heme A, a prosthetic group of mitochondrial cytochrome c oxidase (CcO). Heme A is synthesized from heme B by two sequential enzymatic reactions catalyzed by heme O synthase (HOS/COX10) and heme A synthase (HAS/COX15). HAS catalyzes the conversion of heme O to heme A by two successive hydroxylations of the methyl group at C8, in a reaction that involves matrix ferredoxin YAH1 and ferredoxin reductase ARH1. The first hydroxylation forms heme I, the second hydroxylation results in an unstable dihydroxymethyl group, which spontaneously dehydrates, resulting in the formyl group of heme A. May also play a secondary role in CcO assembly. Plays a role in the maturation of COX1, the heme A-containing structural CcO subunit, possibly by interacting with the COX1-containing sub-assembly complexes that form prior to heme A insertion. May also positively regulate the upstream enzymatic reaction, farnesylation of heme B by HOS/COX10. The polypeptide is Heme A synthase COX15 (Saccharomyces cerevisiae (strain ATCC 204508 / S288c) (Baker's yeast)).